The following is a 585-amino-acid chain: Glutathione S-transferase C-terminal domain-containing protein homolog (585 aa).

The region spanning 120–275 (LGFKGSCLLA…DKCARVLRDL (156 aa)) is the GST C-terminal domain.

The protein belongs to the GSTCD family.

The protein is Glutathione S-transferase C-terminal domain-containing protein homolog of Drosophila melanogaster (Fruit fly).